Reading from the N-terminus, the 342-residue chain is S-adenosylmethionine:tRNA ribosyltransferase-isomerase (342 aa).

Belongs to the QueA family. As to quaternary structure, monomer.

Its subcellular location is the cytoplasm. The enzyme catalyses 7-aminomethyl-7-carbaguanosine(34) in tRNA + S-adenosyl-L-methionine = epoxyqueuosine(34) in tRNA + adenine + L-methionine + 2 H(+). It participates in tRNA modification; tRNA-queuosine biosynthesis. In terms of biological role, transfers and isomerizes the ribose moiety from AdoMet to the 7-aminomethyl group of 7-deazaguanine (preQ1-tRNA) to give epoxyqueuosine (oQ-tRNA). The chain is S-adenosylmethionine:tRNA ribosyltransferase-isomerase from Oceanobacillus iheyensis (strain DSM 14371 / CIP 107618 / JCM 11309 / KCTC 3954 / HTE831).